The following is a 346-amino-acid chain: 4-hydroxy-3-methylbut-2-enyl diphosphate reductase (346 aa).

Cysteine 19 is a binding site for [4Fe-4S] cluster. Residues histidine 48 and histidine 84 each coordinate (2E)-4-hydroxy-3-methylbut-2-enyl diphosphate. Positions 48 and 84 each coordinate dimethylallyl diphosphate. Isopentenyl diphosphate contacts are provided by histidine 48 and histidine 84. Position 106 (cysteine 106) interacts with [4Fe-4S] cluster. (2E)-4-hydroxy-3-methylbut-2-enyl diphosphate is bound at residue histidine 134. Histidine 134 is a dimethylallyl diphosphate binding site. Histidine 134 serves as a coordination point for isopentenyl diphosphate. The Proton donor role is filled by glutamate 136. Threonine 175 contacts (2E)-4-hydroxy-3-methylbut-2-enyl diphosphate. Residue cysteine 205 participates in [4Fe-4S] cluster binding. Positions 233, 234, 235, and 278 each coordinate (2E)-4-hydroxy-3-methylbut-2-enyl diphosphate. Dimethylallyl diphosphate-binding residues include serine 233, serine 234, asparagine 235, and serine 278. Serine 233, serine 234, asparagine 235, and serine 278 together coordinate isopentenyl diphosphate.

It belongs to the IspH family. The cofactor is [4Fe-4S] cluster.

The catalysed reaction is isopentenyl diphosphate + 2 oxidized [2Fe-2S]-[ferredoxin] + H2O = (2E)-4-hydroxy-3-methylbut-2-enyl diphosphate + 2 reduced [2Fe-2S]-[ferredoxin] + 2 H(+). The enzyme catalyses dimethylallyl diphosphate + 2 oxidized [2Fe-2S]-[ferredoxin] + H2O = (2E)-4-hydroxy-3-methylbut-2-enyl diphosphate + 2 reduced [2Fe-2S]-[ferredoxin] + 2 H(+). Its pathway is isoprenoid biosynthesis; dimethylallyl diphosphate biosynthesis; dimethylallyl diphosphate from (2E)-4-hydroxy-3-methylbutenyl diphosphate: step 1/1. It functions in the pathway isoprenoid biosynthesis; isopentenyl diphosphate biosynthesis via DXP pathway; isopentenyl diphosphate from 1-deoxy-D-xylulose 5-phosphate: step 6/6. Functionally, catalyzes the conversion of 1-hydroxy-2-methyl-2-(E)-butenyl 4-diphosphate (HMBPP) into a mixture of isopentenyl diphosphate (IPP) and dimethylallyl diphosphate (DMAPP). Acts in the terminal step of the DOXP/MEP pathway for isoprenoid precursor biosynthesis. This is 4-hydroxy-3-methylbut-2-enyl diphosphate reductase from Brucella abortus (strain S19).